Reading from the N-terminus, the 924-residue chain is Inositol polyphosphate 4-phosphatase type II (924 aa).

Residues Met-1 to Gln-13 are compositionally biased toward basic and acidic residues. Disordered stretches follow at residues Met-1–Pro-24, Ile-481–Tyr-516, and Asp-546–Ser-570. The C2 domain maps to Asp-23 to Leu-165.

The protein belongs to the inositol 3,4-bisphosphate 4-phosphatase family. As to expression, widely expressed with highest levels occurring in the skeletal muscle and heart.

It catalyses the reaction a 1,2-diacyl-sn-glycero-3-phospho-(1D-myo-inositol-3,4-bisphosphate) + H2O = a 1,2-diacyl-sn-glycero-3-phospho-(1D-myo-inositol-3-phosphate) + phosphate. The enzyme catalyses 1D-myo-inositol 1,3,4-trisphosphate + H2O = 1D-myo-inositol 1,3-bisphosphate + phosphate. It carries out the reaction 1D-myo-inositol 3,4-bisphosphate + H2O = 1D-myo-inositol 3-phosphate + phosphate. Its pathway is signal transduction; phosphatidylinositol signaling pathway. Strongly inhibited by inositol hexakisphosphate. In terms of biological role, catalyzes the hydrolysis of the 4-position phosphate of phosphatidylinositol 3,4-bisphosphate, inositol 1,3,4-trisphosphate and inositol 3,4-trisphosphate. Plays a role in the late stages of macropinocytosis by dephosphorylating phosphatidylinositol 3,4-bisphosphate in membrane ruffles. The lipid phosphatase activity is critical for tumor suppressor function. Antagonizes the PI3K-AKT/PKB signaling pathway by dephosphorylating phosphoinositides and thereby modulating cell cycle progression and cell survival. This Homo sapiens (Human) protein is Inositol polyphosphate 4-phosphatase type II (INPP4B).